The primary structure comprises 273 residues: Undecaprenyl-diphosphatase (273 aa).

7 helical membrane passes run 54 to 74 (LGSI…LIGI), 90 to 110 (LTLI…LVFH), 116 to 136 (LFNP…LIAA), 156 to 178 (QAFM…SGAT), 190 to 210 (YAAS…ATVL), 222 to 242 (ADIP…LIAI), and 252 to 272 (ISFI…YVVF).

The protein belongs to the UppP family.

Its subcellular location is the cell inner membrane. The enzyme catalyses di-trans,octa-cis-undecaprenyl diphosphate + H2O = di-trans,octa-cis-undecaprenyl phosphate + phosphate + H(+). Catalyzes the dephosphorylation of undecaprenyl diphosphate (UPP). Confers resistance to bacitracin. The sequence is that of Undecaprenyl-diphosphatase from Salmonella paratyphi A (strain ATCC 9150 / SARB42).